Reading from the N-terminus, the 417-residue chain is Transmembrane protease serine 11D (417 aa).

The Cytoplasmic segment spans residues 1 to 17; it reads MYRPRSMVSPSRFFNPF. The helical; Signal-anchor for type II membrane protein transmembrane segment at 18-38 threads the bilayer; it reads MVALIVIITVGLLAMTAGLLI. Residues 39-417 lie on the Extracellular side of the membrane; that stretch reads HFLAFDKRAY…RNWIRQQTGI (379 aa). Residues 46–162 form the SEA domain; sequence RAYFYHSNFH…SNGITSLTDQ (117 aa). Disulfide bonds link Cys-172/Cys-291, Cys-211/Cys-227, Cys-336/Cys-352, and Cys-363/Cys-392. Residues 186–416 form the Peptidase S1 domain; that stretch reads IIGGTQAETG…YRNWIRQQTG (231 aa). Catalysis depends on charge relay system residues His-226 and Asp-271. Ser-367 functions as the Charge relay system in the catalytic mechanism.

The protein belongs to the peptidase S1 family. Monomer. As to expression, isoform 1 and isoform 2 are expressed in the esophagus, tongue and trachea. Isoform 2 is also highly expressed in the adrenal cortex and heart.

The protein localises to the cell membrane. It is found in the secreted. Functionally, may play some biological role in the host defense system on the mucous membrane independently of or in cooperation with other substances in airway mucous or bronchial secretions. Plays a role in the proteolytic processing of ACE2. Preferentially cleaves the C-terminal side of arginine residues at the P1 position of certain peptides. Isoform 2 may play a key role in regulating adrenal proliferation by specifically cleaving N-POMC. The chain is Transmembrane protease serine 11D (Tmprss11d) from Rattus norvegicus (Rat).